Consider the following 250-residue polypeptide: Hydroxyacylglutathione hydrolase (250 aa).

Positions 53, 55, 57, 58, 111, 128, and 166 each coordinate Zn(2+).

Belongs to the metallo-beta-lactamase superfamily. Glyoxalase II family. Monomer. Zn(2+) is required as a cofactor.

The catalysed reaction is an S-(2-hydroxyacyl)glutathione + H2O = a 2-hydroxy carboxylate + glutathione + H(+). It participates in secondary metabolite metabolism; methylglyoxal degradation; (R)-lactate from methylglyoxal: step 2/2. Functionally, thiolesterase that catalyzes the hydrolysis of S-D-lactoyl-glutathione to form glutathione and D-lactic acid. The chain is Hydroxyacylglutathione hydrolase from Methylobacillus flagellatus (strain ATCC 51484 / DSM 6875 / VKM B-1610 / KT).